The following is a 121-amino-acid chain: UPF0145 protein SGR_4080 (121 aa).

The protein belongs to the UPF0145 family.

The chain is UPF0145 protein SGR_4080 from Streptomyces griseus subsp. griseus (strain JCM 4626 / CBS 651.72 / NBRC 13350 / KCC S-0626 / ISP 5235).